A 212-amino-acid chain; its full sequence is ATP-dependent dethiobiotin synthetase BioD (212 aa).

13–18 (GIGKTV) serves as a coordination point for ATP. Residue T17 participates in Mg(2+) binding. K33 is an active-site residue. Residue S37 participates in substrate binding. Mg(2+) is bound at residue E100. Residues 100-103 (EGAG) and 184-186 (PRL) each bind ATP.

This sequence belongs to the dethiobiotin synthetase family. As to quaternary structure, homodimer. The cofactor is Mg(2+).

Its subcellular location is the cytoplasm. The catalysed reaction is (7R,8S)-7,8-diammoniononanoate + CO2 + ATP = (4R,5S)-dethiobiotin + ADP + phosphate + 3 H(+). Its pathway is cofactor biosynthesis; biotin biosynthesis; biotin from 7,8-diaminononanoate: step 1/2. Catalyzes a mechanistically unusual reaction, the ATP-dependent insertion of CO2 between the N7 and N8 nitrogen atoms of 7,8-diaminopelargonic acid (DAPA, also called 7,8-diammoniononanoate) to form a ureido ring. The chain is ATP-dependent dethiobiotin synthetase BioD from Rhodopseudomonas palustris (strain ATCC BAA-98 / CGA009).